Here is a 195-residue protein sequence, read N- to C-terminus: Protein GrpE (195 aa).

Residues 1–60 (MAKDEEKNSQASAAPNEGEVKAKQEQTSAKEPAAKAGETEKVADLQKQVEELTKQLDDQK) form a disordered region. A compositionally biased stretch (basic and acidic residues) spans 37 to 60 (GETEKVADLQKQVEELTKQLDDQK).

The protein belongs to the GrpE family. In terms of assembly, homodimer.

It is found in the cytoplasm. Functionally, participates actively in the response to hyperosmotic and heat shock by preventing the aggregation of stress-denatured proteins, in association with DnaK and GrpE. It is the nucleotide exchange factor for DnaK and may function as a thermosensor. Unfolded proteins bind initially to DnaJ; upon interaction with the DnaJ-bound protein, DnaK hydrolyzes its bound ATP, resulting in the formation of a stable complex. GrpE releases ADP from DnaK; ATP binding to DnaK triggers the release of the substrate protein, thus completing the reaction cycle. Several rounds of ATP-dependent interactions between DnaJ, DnaK and GrpE are required for fully efficient folding. The chain is Protein GrpE from Limosilactobacillus fermentum (strain NBRC 3956 / LMG 18251) (Lactobacillus fermentum).